A 524-amino-acid polypeptide reads, in one-letter code: Glucose-6-phosphate 1-dehydrogenase (524 aa).

Residue S20 is modified to Phosphoserine. NADP(+)-binding positions include 42–49 (GASGDLAK), R76, and K175. Residues K175, 205–209 (HYLGK), E243, and D262 each bind D-glucose 6-phosphate. H267 acts as the Proton acceptor in catalysis. R362 is an NADP(+) binding site. Positions 365 and 370 each coordinate D-glucose 6-phosphate. K371, R375, and R398 together coordinate NADP(+). Residue Q400 participates in D-glucose 6-phosphate binding. Residues 406–408 (YFK), 426–428 (DLT), R492, Y508, and W514 contribute to the NADP(+) site.

It belongs to the glucose-6-phosphate dehydrogenase family.

It localises to the cytoplasm. Its subcellular location is the cytosol. It catalyses the reaction D-glucose 6-phosphate + NADP(+) = 6-phospho-D-glucono-1,5-lactone + NADPH + H(+). The protein operates within carbohydrate degradation; pentose phosphate pathway; D-ribulose 5-phosphate from D-glucose 6-phosphate (oxidative stage): step 1/3. In terms of biological role, cytosolic glucose-6-phosphate dehydrogenase that catalyzes the first and rate-limiting step of the oxidative branch within the pentose phosphate pathway/shunt, an alternative route to glycolysis for the dissimilation of carbohydrates and a major source of reducing power and metabolic intermediates for fatty acid and nucleic acid biosynthetic processes. In Drosophila melanogaster (Fruit fly), this protein is Glucose-6-phosphate 1-dehydrogenase.